We begin with the raw amino-acid sequence, 241 residues long: Small ribosomal subunit protein uS2 (241 aa).

This sequence belongs to the universal ribosomal protein uS2 family.

The chain is Small ribosomal subunit protein uS2 from Salmonella agona (strain SL483).